The primary structure comprises 122 residues: Ribosome-binding factor A (122 aa).

Belongs to the RbfA family. In terms of assembly, monomer. Binds 30S ribosomal subunits, but not 50S ribosomal subunits or 70S ribosomes.

Its subcellular location is the cytoplasm. Its function is as follows. One of several proteins that assist in the late maturation steps of the functional core of the 30S ribosomal subunit. Associates with free 30S ribosomal subunits (but not with 30S subunits that are part of 70S ribosomes or polysomes). Required for efficient processing of 16S rRNA. May interact with the 5'-terminal helix region of 16S rRNA. The polypeptide is Ribosome-binding factor A (Cupriavidus pinatubonensis (strain JMP 134 / LMG 1197) (Cupriavidus necator (strain JMP 134))).